A 268-amino-acid chain; its full sequence is Fibroblast growth factor 8 (268 aa).

The N-terminal stretch at 1 to 22 is a signal peptide; it reads MGSPRSALSCLLLHLLVLCLQA. Glutamine 23 carries the pyrrolidone carboxylic acid modification. A disordered region spans residues 29–87; that stretch reads QKRGPGAGNPADTLGQGHEDRPFGQRSRAGKNFTNPAPNYPEEGSKEQRDSVLPKVTQR. N-linked (GlcNAc...) asparagine glycosylation is present at asparagine 60. The segment covering 71–80 has biased composition (basic and acidic residues); sequence EGSKEQRDSV. N-linked (GlcNAc...) asparagine glycosylation is present at asparagine 190.

The protein belongs to the heparin-binding growth factors family. In terms of assembly, monomer. Homodimer. Interacts with FGFR1, FGFR2, FGFR3 and FGFR4. Affinity between fibroblast growth factors (FGFs) and their receptors is increased by heparan sulfate glycosaminoglycans that function as coreceptors. In terms of processing, the N-terminus is blocked. In terms of tissue distribution, absent in normal mammary glands and detected only in adult testis and ovary and in midgestational embryos.

It localises to the secreted. Its function is as follows. Plays an important role in the regulation of embryonic development, cell proliferation, cell differentiation and cell migration. Required for normal brain, eye, ear and limb development during embryogenesis. Required for normal development of the gonadotropin-releasing hormone (GnRH) neuronal system. Plays a role in neurite outgrowth in hippocampal cells. Cooperates with Wnt-1 in mouse mammary tumor virus-induced murine mammary tumorigenesis. This is Fibroblast growth factor 8 (Fgf8) from Mus musculus (Mouse).